The chain runs to 455 residues: Fez family zinc finger protein 2 (455 aa).

A disordered region spans residues Met1–Pro22. Residues Thr27–Pro42 carry the Engrailed homology 1 repressor motif. 6 C2H2-type zinc fingers span residues Phe272–His294, Phe300–His322, His328–His350, Phe356–His378, Tyr384–His406, and Phe412–His435.

This sequence belongs to the krueppel C2H2-type zinc-finger protein family. Highly expressed in neocortical layer V, moderately expressed in layer VI. Expressed in subcortically projecting neurons.

It localises to the nucleus. In terms of biological role, transcription repressor. Required for the specification of corticospinal motor neurons and other subcerebral projection neurons. May play a role in layer and neuronal subtype-specific patterning of subcortical projections and axonal fasciculation. Controls the development of dendritic arborization and spines of large layer V pyramidal neurons. Plays a role in rostro-caudal patterning of the diencephalon and in prethalamic formation. The protein is Fez family zinc finger protein 2 (Fezf2) of Mus musculus (Mouse).